The primary structure comprises 182 residues: Troponin I, fast skeletal muscle (182 aa).

The residue at position 2 (glycine 2) is an N-acetylglycine. Residues 2-48 form an involved in binding TNC region; sequence GDEEKRNRAITARRQHLKSVMLQIAATELEKEEGRREAEKQNYLAEH. A Phosphothreonine; by PHK modification is found at threonine 12. The segment at 97–117 is involved in binding TNC and actin; that stretch reads NQKLFDLRGKFKRPPLRRVRM. Serine 118 carries the phosphoserine; by PKA modification.

This sequence belongs to the troponin I family. Binds to actin and tropomyosin.

Troponin I is the inhibitory subunit of troponin, the thin filament regulatory complex which confers calcium-sensitivity to striated muscle actomyosin ATPase activity. The protein is Troponin I, fast skeletal muscle (TNNI2) of Oryctolagus cuniculus (Rabbit).